The primary structure comprises 369 residues: Ubiquinone biosynthesis O-methyltransferase, mitochondrial (369 aa).

A mitochondrion-targeting transit peptide spans 1-85; the sequence is MWSGRKLGSS…SFRYPWARLY (85 aa). Position 124 (Arg-124) interacts with S-adenosyl-L-methionine. N6-acetyllysine is present on residues Lys-143 and Lys-149. Residues Gly-154 and Asp-175 each coordinate S-adenosyl-L-methionine. At Lys-196 the chain carries N6-acetyllysine. Residue Ser-222 coordinates S-adenosyl-L-methionine. Mg(2+)-binding residues include Glu-223, Glu-226, and His-227.

It belongs to the class I-like SAM-binding methyltransferase superfamily. UbiG/COQ3 family. In terms of assembly, component of a multi-subunit COQ enzyme complex, composed of at least COQ3, COQ4, COQ5, COQ6, COQ7 and COQ9. The cofactor is Mg(2+).

It localises to the mitochondrion inner membrane. The enzyme catalyses 3,4-dihydroxy-5-(all-trans-decaprenyl)benzoate + S-adenosyl-L-methionine = 4-hydroxy-3-methoxy-5-(all-trans-decaprenyl)benzoate + S-adenosyl-L-homocysteine + H(+). It catalyses the reaction a 3-demethylubiquinone + S-adenosyl-L-methionine = a ubiquinone + S-adenosyl-L-homocysteine. It carries out the reaction 3-demethylubiquinol-10 + S-adenosyl-L-methionine = ubiquinol-10 + S-adenosyl-L-homocysteine + H(+). It participates in cofactor biosynthesis; ubiquinone biosynthesis. Functionally, O-methyltransferase required for two non-consecutive steps during ubiquinone biosynthesis. Catalyzes the 2 O-methylation of 3,4-dihydroxy-5-(all-trans-decaprenyl)benzoic acid into 4-hydroxy-3-methoxy-5-(all-trans-decaprenyl)benzoic acid. Also catalyzes the last step of ubiquinone biosynthesis by mediating methylation of 3-demethylubiquinone into ubiquinone. Also able to mediate the methylation of 3-demethylubiquinol-10 into ubiquinol-10. The chain is Ubiquinone biosynthesis O-methyltransferase, mitochondrial from Homo sapiens (Human).